A 374-amino-acid chain; its full sequence is MDARRARQKDCRAKKNFKKFRYVKLISMETPSSSDDSCDSFASDNFANTRLQANREGCRTRSQCTRSGPLRVAMKFPPRSTRGAANKRTVPPEPPENSVTDSNSDSEDESGMNFLEKRALNIKQNKAMLAKLMSELESFPGSFPGRRSLPGPSSRPKTPRRRTFPGVACRRNPERRARPLTRSRSRVLGSLSALPTEEEEEEEEEEDKYMLVRKRKSMVGYMNEDDMPRSRRPGPMTLPHVVRPVDEITEEELENICNNSREKIYNRSLGSTCHQCRQKTIDTKTNCRNPECWGVRGQFCGPCLRNRYGEEVKDALLDPNWHCPPCRGICNCSFCRQRDGRCATGVLVYLAKYHGFGNVHAYLKSLKQEFEMQG.

Disordered stretches follow at residues 53-110 (ANRE…EDES) and 138-208 (SFPG…EEDK). A Phosphoserine modification is found at serine 142. The segment at 146–170 (RRSLPGPSSRPKTPRRRTFPGVACR) is interaction with MYC. The Nuclear localization signal signature appears at 160–176 (RRRTFPGVACRRNPERR). Residue threonine 163 is modified to Phosphothreonine. Serine 190 carries the phosphoserine modification. At threonine 196 the chain carries Phosphothreonine. The segment covering 196–207 (TEEEEEEEEEED) has biased composition (acidic residues). A Glycyl lysine isopeptide (Lys-Gly) (interchain with G-Cter in SUMO2) cross-link involves residue lysine 208. Phosphoserine is present on serine 217. Residues 250-374 (EEELENICNN…SLKQEFEMQG (125 aa)) are mediates transcriptional activity.

In terms of assembly, interacts with MYC (via C-terminus), YWHAE and YWHAZ. Post-translationally, phosphorylation at Thr-163 promotes interaction with YWHAE and YWHAZ, dissociation from MYC and sequestration in the cytoplasm.

It is found in the nucleus. Its subcellular location is the cytoplasm. In terms of biological role, participates in MYC-mediated cell transformation and apoptosis; induces anchorage-independent growth and clonogenicity in lymphoblastoid cells. Insufficient to induce tumorigenicity when overexpressed but contributes to MYC-mediated tumorigenesis. May play a role as transcriptional regulator. The sequence is that of Cell division cycle-associated protein 7 (CDCA7) from Bos taurus (Bovine).